We begin with the raw amino-acid sequence, 697 residues long: U-box domain-containing protein 18 (697 aa).

A U-box N-terminal domain (UND) required for EXO70B1 binding and crucial for the negative regulation of ABA-dependent stomatal movement region spans residues 23 to 210; it reads SISIVTLLDS…INRILDHVGI (188 aa). One can recognise a U-box domain in the interval 287-361; the sequence is LKVEDLLCPI…RKHCKTNGIV (75 aa). 6 ARM repeats span residues 420-459, 461-500, 502-544, 546-587, 589-631, and 657-696; these read SFNRSCLVKAGAVTPLLKLLSSVDIRIQENAMAGILNLSK, VTGKSKIAGEGLKILVEILNEGAKTETRLYSASALFYLSS, EDYS…GLLM, SDNH…KLAE, PDGT…NLCL, and NGEYGGSKKASALIRMIHEFQERKTGSVEPNLQRGRFVHA.

Interacts with EXO70B1 via its U-box N-terminal domain (UND).

It is found in the endomembrane system. It catalyses the reaction S-ubiquitinyl-[E2 ubiquitin-conjugating enzyme]-L-cysteine + [acceptor protein]-L-lysine = [E2 ubiquitin-conjugating enzyme]-L-cysteine + N(6)-ubiquitinyl-[acceptor protein]-L-lysine.. The protein operates within protein modification; protein ubiquitination. In terms of biological role, functions as an E3 ubiquitin ligase. Mediates EXO70B1 ubiquitination. Involved in the regulation of abscisic acid (ABA)-mediated stomatal movements. The polypeptide is U-box domain-containing protein 18 (Arabidopsis thaliana (Mouse-ear cress)).